The chain runs to 108 residues: MAIRQATTPQHDAGTVLERKEQALKPPAMYKVLLLNDDYTPMEFVVMILQQYFSKDRETATQIMLTVHREGRGVCGIYTRDIAATKVELVSTHARQAGHPLQCVMEEA.

Belongs to the ClpS family. Binds to the N-terminal domain of the chaperone ClpA.

Involved in the modulation of the specificity of the ClpAP-mediated ATP-dependent protein degradation. In Ralstonia nicotianae (strain ATCC BAA-1114 / GMI1000) (Ralstonia solanacearum), this protein is ATP-dependent Clp protease adapter protein ClpS.